The chain runs to 579 residues: DELLA protein RGA2 (579 aa).

Positions 1 to 31 (MKRDLHQFQGPPDTRFPNHGTANTGSSSKDK) are disordered. The short motif at 45-49 (DELLA) is the DELLA motif element. 2 stretches are compositionally biased toward low complexity: residues 149–162 (SSSS…NSQS) and 174–183 (SLVTGTTVTT). A disordered region spans residues 149-183 (SSSSSNQAGDNSQSTKRLKSCSSPDSLVTGTTVTT). In terms of domain architecture, GRAS spans 205–574 (VDSQENGVRL…RPLITTSAWK (370 aa)). Positions 212–266 (VRLVHALMACAEAIQNNDLSIAEALVKQIGFLAVSQAGAMRKVATYFAEALARRI) are leucine repeat I (LRI). The VHIID stretch occupies residues 285–350 (QMHFYETCPY…GGPPVFRLTG (66 aa)). The short motif at 316 to 320 (VHVID) is the VHIID element. Residues 364-396 (EVGCKLAQLAEAIHVEFEYRGFVANSLADLDAS) form a leucine repeat II (LRII) region. A PFYRE region spans residues 408 to 495 (VAVNSVFELH…EVYLGKQICN (88 aa)). The short motif at 416–420 (LHKLL) is the LXXLL motif element. Positions 498 to 574 (ACEGPDRVER…RPLITTSAWK (77 aa)) are SAW.

This sequence belongs to the GRAS family. DELLA subfamily. In terms of processing, phosphorylated. Ubiquitinated. Upon GA application it is ubiquitinated, leading to its subsequent degradation.

Its subcellular location is the nucleus. Probable transcriptional regulator that acts as a repressor of the gibberellin (GA) signaling pathway. Probably acts by participating in large multiprotein complexes that represses transcription of GA-inducible genes. Upon GA application, it is degraded by the proteasome, allowing the GA signaling pathway. This is DELLA protein RGA2 (RGA2) from Brassica campestris (Field mustard).